The sequence spans 364 residues: Tyrosyl-DNA phosphodiesterase 2 (364 aa).

At M1 the chain carries N-acetylmethionine. Low complexity predominate over residues M1–G10. Positions M1–E21 are disordered. K23 participates in a covalent cross-link: Glycyl lysine isopeptide (Lys-Gly) (interchain with G-Cter in SUMO2). The disordered stretch occupies residues E68–V108. A phosphothreonine; by ACVR1B mark is found at T88 and T92. A Phosphoserine modification is found at S95. The interval N122 to L126 is interaction with 5' end of substrate DNA. Residues D124 and E154 each contribute to the Mg(2+) site. The tract at residues H228–R233 is interaction with 5' end of substrate DNA. Residue D264 is the Proton donor/acceptor of the active site. The tract at residues N266–R268 is interaction with 5' end of substrate DNA.

This sequence belongs to the CCR4/nocturin family. In terms of assembly, interacts with TRAF2, TRAF3, TRAF5, TRAF6, TNFRSF8/CD30, TNFRSF5/CD40, TNFRSF1B/TNF-R75, ETS1, ETS2, FLI1, SMAD3 and ACVR1B/ALK4. Mg(2+) serves as cofactor. Requires Mn(2+) as cofactor. Post-translationally, ubiquitinated by TRAF6.

It is found in the nucleus. The protein localises to the PML body. The protein resides in the nucleolus. Its subcellular location is the cytoplasm. DNA repair enzyme that can remove a variety of covalent adducts from DNA through hydrolysis of a 5'-phosphodiester bond, giving rise to DNA with a free 5' phosphate. Catalyzes the hydrolysis of dead-end complexes between DNA and the topoisomerase 2 (TOP2) active site tyrosine residue. The 5'-tyrosyl DNA phosphodiesterase activity can enable the repair of TOP2-induced DNA double-strand breaks/DSBs without the need for nuclease activity, creating a 'clean' DSB with 5'-phosphate termini that are ready for ligation. Thereby, protects the transcription of many genes involved in neurological development and maintenance from the abortive activity of TOP2. Hydrolyzes 5'-phosphoglycolates on protruding 5' ends on DSBs due to DNA damage by radiation and free radicals. Has preference for single-stranded DNA or duplex DNA with a 4 base pair overhang as substrate. Also has 3'-tyrosyl DNA phosphodiesterase activity, but less efficiently and much slower than TDP1. Constitutes the major if not only 5'-tyrosyl-DNA phosphodiesterase in cells. Also acts as an adapter by participating in the specific activation of MAP3K7/TAK1 in response to TGF-beta: associates with components of the TGF-beta receptor-TRAF6-TAK1 signaling module and promotes their ubiquitination dependent complex formation. Involved in non-canonical TGF-beta induced signaling routes. May also act as a negative regulator of ETS1 and may inhibit NF-kappa-B activation. Acts as a regulator of ribosome biogenesis following stress. The chain is Tyrosyl-DNA phosphodiesterase 2 (TDP2) from Bos taurus (Bovine).